Reading from the N-terminus, the 122-residue chain is Holo-[acyl-carrier-protein] synthase (122 aa).

Mg(2+) is bound by residues D8 and E57.

Belongs to the P-Pant transferase superfamily. AcpS family. Requires Mg(2+) as cofactor.

The protein resides in the cytoplasm. It catalyses the reaction apo-[ACP] + CoA = holo-[ACP] + adenosine 3',5'-bisphosphate + H(+). In terms of biological role, transfers the 4'-phosphopantetheine moiety from coenzyme A to a Ser of acyl-carrier-protein. The protein is Holo-[acyl-carrier-protein] synthase of Protochlamydia amoebophila (strain UWE25).